Consider the following 179-residue polypeptide: Transmembrane protein 196 (179 aa).

Helical transmembrane passes span 11 to 31 (LLVL…VGAV), 44 to 61 (LGDS…ILCA), 67 to 87 (LVMI…ILNF), and 100 to 120 (LYPL…GCTL).

It localises to the cytoplasm. The protein resides in the membrane. Acts as a tumor suppressor in lung cancer. Inhibits tumor cell growth by inhibiting cell proliferation and migration and promoting cell apoptosis. Inhibits metastasis of lung cancer by suppressing beta-catenin expression in the Wnt/beta-catenin signaling pathway. In Pongo abelii (Sumatran orangutan), this protein is Transmembrane protein 196 (TMEM196).